A 151-amino-acid polypeptide reads, in one-letter code: Chaperonin GroEL (151 aa).

41–45 (DGTTT) is an ATP binding site.

It belongs to the chaperonin (HSP60) family. In terms of assembly, forms a cylinder of 14 subunits composed of two heptameric rings stacked back-to-back. Interacts with the co-chaperonin GroES.

It is found in the cytoplasm. It catalyses the reaction ATP + H2O + a folded polypeptide = ADP + phosphate + an unfolded polypeptide.. Together with its co-chaperonin GroES, plays an essential role in assisting protein folding. The GroEL-GroES system forms a nano-cage that allows encapsulation of the non-native substrate proteins and provides a physical environment optimized to promote and accelerate protein folding. The protein is Chaperonin GroEL of Mycobacterium avium.